The chain runs to 1226 residues: Polyamine-transporting ATPase 13A3 (1226 aa).

The Cytoplasmic segment spans residues 1-28; it reads MDKEERKIINQGQEDEMEIYGYNLSRWK. The stretch at 29 to 49 is an intramembrane region; the sequence is LAIVSLGVICTGGFLLLLLYW. Over 50-205 the chain is Cytoplasmic; the sequence is MPEWRVKATC…IAVKVPSVFK (156 aa). Phosphoserine is present on Ser-98. Residues 206–226 form a helical membrane-spanning segment; that stretch reads LLIKEVLNPFYIFQLFSVILW. The Lumenal portion of the chain corresponds to 227-232; it reads STDEYY. A helical membrane pass occupies residues 233 to 253; it reads YYALAIVVMSIVSIVSSLYSI. Residues 254–409 lie on the Cytoplasmic side of the membrane; sequence RKQYVMLHDM…KPTDFKLYRD (156 aa). A helical transmembrane segment spans residues 410–430; it reads AYLFLLCLVAVAGIGFIYTII. The Lumenal portion of the chain corresponds to 431-448; that stretch reads NSILNEVQVGVIIIESLD. A helical transmembrane segment spans residues 449 to 469; that stretch reads IITITVPPALPAAMTAGIVYA. Residues 470-940 lie on the Cytoplasmic side of the membrane; sequence QRRLKKIGIF…ALITSFCVFK (471 aa). The 4-aspartylphosphate intermediate role is filled by Asp-498. Mg(2+) is bound by residues Asp-498 and Thr-500. ATP contacts are provided by residues 498-500, Phe-628, Arg-684, and Asp-750; that span reads DKT. Ser-817 is modified (phosphoserine). Residue Asp-883 participates in Mg(2+) binding. 883 to 887 provides a ligand contact to ATP; sequence DGAND. The chain crosses the membrane as a helical span at residues 941-961; that stretch reads FMALYSIIQYFSVTLLYSILS. Residue Asn-962 is a topological domain, lumenal. Residues 963-983 form a helical membrane-spanning segment; that stretch reads LGDFQFLFIDLAIILVVVFTM. Residues 984 to 999 are Cytoplasmic-facing; sequence SLNPAWKELVAQRPPS. Residues 1000 to 1020 traverse the membrane as a helical segment; it reads GLISGALLFSVLSQIIICIGF. The Lumenal portion of the chain corresponds to 1021–1073; it reads QSLGFFWVKQQPWYEVWHPKSDACNATGSLLWNSSHLDNETELDEHNIQNYEN. Residues 1074–1094 form a helical membrane-spanning segment; sequence TTVFFISSFQYLIVAIAFSKG. Residues 1095 to 1105 are Cytoplasmic-facing; that stretch reads KPFRQPCYKNY. Residues 1106-1126 form a helical membrane-spanning segment; it reads FFVFSVIFLYVFILFIMLYPV. The Lumenal segment spans residues 1127-1143; sequence ASVDQVLQIVCVPYQWR. Residues 1144-1164 traverse the membrane as a helical segment; it reads VTMLIIVLVNAFVSITVEESV. Residues 1165–1226 lie on the Cytoplasmic side of the membrane; that stretch reads DRWRKCCLPW…NGSCQIITIT (62 aa).

Belongs to the cation transport ATPase (P-type) (TC 3.A.3) family. Type V subfamily.

It localises to the recycling endosome membrane. It is found in the early endosome membrane. The protein localises to the late endosome membrane. The catalysed reaction is putrescine(out) + ATP + H2O = putrescine(in) + ADP + phosphate + H(+). In terms of biological role, ATP-driven pump involved in endocytosis-dependent polyamine transport. Uses ATP as an energy source to transfer polyamine precursor putrescine from the endosomal compartment to the cytosol. In Macaca fascicularis (Crab-eating macaque), this protein is Polyamine-transporting ATPase 13A3 (ATP13A3).